Reading from the N-terminus, the 259-residue chain is 3-deoxy-manno-octulosonate cytidylyltransferase (259 aa).

It belongs to the KdsB family.

The protein localises to the cytoplasm. It catalyses the reaction 3-deoxy-alpha-D-manno-oct-2-ulosonate + CTP = CMP-3-deoxy-beta-D-manno-octulosonate + diphosphate. It participates in nucleotide-sugar biosynthesis; CMP-3-deoxy-D-manno-octulosonate biosynthesis; CMP-3-deoxy-D-manno-octulosonate from 3-deoxy-D-manno-octulosonate and CTP: step 1/1. It functions in the pathway bacterial outer membrane biogenesis; lipopolysaccharide biosynthesis. Its function is as follows. Activates KDO (a required 8-carbon sugar) for incorporation into bacterial lipopolysaccharide in Gram-negative bacteria. This chain is 3-deoxy-manno-octulosonate cytidylyltransferase, found in Aeromonas salmonicida (strain A449).